The chain runs to 267 residues: Hydroxynaphthalene reductase-like protein Arp2 (267 aa).

NADP(+) is bound by residues I25, N45, D71, and N98. Residues S147 and S148 each act as proton donor in the active site. NADP(+)-binding residues include Y162, K166, V195, and T197. The active-site Proton acceptor is the Y162. The active-site Lowers pKa of active site Tyr is the K166.

It belongs to the short-chain dehydrogenases/reductases (SDR) family.

Functionally, hydroxynaphthalene reductase-like protein; part of the Pks2 gene cluster that mediates the formation of infectious structures (appressoria), enabling these fungi to kill insects faster. The product of the Pks2 gene cluster is different from the one of Pks1 and has still not been identified. The sequence is that of Hydroxynaphthalene reductase-like protein Arp2 from Metarhizium robertsii (strain ARSEF 23 / ATCC MYA-3075) (Metarhizium anisopliae (strain ARSEF 23)).